Reading from the N-terminus, the 23-residue chain is Alyteserin-1b (23 aa).

Asn23 carries the asparagine amide modification.

Expressed by the skin glands.

It localises to the secreted. It is found in the target cell membrane. Functionally, antibacterial peptide with amphipathic alpha-helical structure. Shows selective growth inhibitory activity against the Gram-negative bacteria E.coli (MIC=25 uM). Has a weak hemolytic activity against human erythrocytes (LC(50)=200 uM). Is not active against S.aureus (MIC=200 uM). The protein is Alyteserin-1b of Alytes obstetricans (Common midwife toad).